The sequence spans 734 residues: Ribosomal RNA large subunit methyltransferase K/L (734 aa).

Residues 49 to 167 (HAYRICMWSR…KTEHTYCLDL (119 aa)) enclose the THUMP domain.

This sequence belongs to the methyltransferase superfamily. RlmKL family.

The protein localises to the cytoplasm. It carries out the reaction guanosine(2445) in 23S rRNA + S-adenosyl-L-methionine = N(2)-methylguanosine(2445) in 23S rRNA + S-adenosyl-L-homocysteine + H(+). It catalyses the reaction guanosine(2069) in 23S rRNA + S-adenosyl-L-methionine = N(2)-methylguanosine(2069) in 23S rRNA + S-adenosyl-L-homocysteine + H(+). Specifically methylates the guanine in position 2445 (m2G2445) and the guanine in position 2069 (m7G2069) of 23S rRNA. In Acinetobacter baumannii (strain AYE), this protein is Ribosomal RNA large subunit methyltransferase K/L.